A 413-amino-acid polypeptide reads, in one-letter code: DNA polymerase IV 1 (413 aa).

Positions isoleucine 7–glycine 188 constitute a UmuC domain. Mg(2+) contacts are provided by aspartate 11 and aspartate 107. The active site involves glutamate 108.

It belongs to the DNA polymerase type-Y family. As to quaternary structure, monomer. Requires Mg(2+) as cofactor.

The protein resides in the cytoplasm. The catalysed reaction is DNA(n) + a 2'-deoxyribonucleoside 5'-triphosphate = DNA(n+1) + diphosphate. Functionally, poorly processive, error-prone DNA polymerase involved in untargeted mutagenesis. Copies undamaged DNA at stalled replication forks, which arise in vivo from mismatched or misaligned primer ends. These misaligned primers can be extended by PolIV. Exhibits no 3'-5' exonuclease (proofreading) activity. May be involved in translesional synthesis, in conjunction with the beta clamp from PolIII. This is DNA polymerase IV 1 (dinB1) from Halalkalibacterium halodurans (strain ATCC BAA-125 / DSM 18197 / FERM 7344 / JCM 9153 / C-125) (Bacillus halodurans).